Consider the following 489-residue polypeptide: GTPase Der (489 aa).

2 EngA-type G domains span residues 3 to 166 (PVVA…FDDV) and 201 to 374 (IKLA…DSST). GTP is bound by residues 9–16 (GRPNVGKS), 56–60 (DTGGI), 118–121 (NKTD), 207–214 (GRPNVGKS), 254–258 (DTAGV), and 319–322 (NKWD). The region spanning 375–459 (KRISTSILTR…PIRIEFREGT (85 aa)) is the KH-like domain.

Belongs to the TRAFAC class TrmE-Era-EngA-EngB-Septin-like GTPase superfamily. EngA (Der) GTPase family. In terms of assembly, associates with the 50S ribosomal subunit.

Functionally, GTPase that plays an essential role in the late steps of ribosome biogenesis. In Psychromonas ingrahamii (strain DSM 17664 / CCUG 51855 / 37), this protein is GTPase Der.